The sequence spans 363 residues: Phospho-N-acetylmuramoyl-pentapeptide-transferase (363 aa).

10 helical membrane passes run 3-23, 48-68, 83-103, 121-141, 159-179, 192-212, 234-254, 261-281, 286-306, and 340-360; these read QILFAGVIGLFLTLVGTPLLI, GTPTMGGIAFILATVAAYFLA, PTFSGLLVLGLMVGMGLVGFL, AKMIGQLTVGIAFAVLSLQFA, FGWTIGPVLFVVWALFMILAM, LATGASVLVFGAYTFIGVWQF, PLDLAVVASALMGSCLGFLWW, IFMGDTGSLALGGVLAGLAIC, LLMAILGGLFVLITMSVVIQV, and FWIIQGICVIVGLGLFYAGWA.

Belongs to the glycosyltransferase 4 family. MraY subfamily. Mg(2+) is required as a cofactor.

It is found in the cell membrane. The catalysed reaction is UDP-N-acetyl-alpha-D-muramoyl-L-alanyl-gamma-D-glutamyl-meso-2,6-diaminopimeloyl-D-alanyl-D-alanine + di-trans,octa-cis-undecaprenyl phosphate = di-trans,octa-cis-undecaprenyl diphospho-N-acetyl-alpha-D-muramoyl-L-alanyl-D-glutamyl-meso-2,6-diaminopimeloyl-D-alanyl-D-alanine + UMP. Its pathway is cell wall biogenesis; peptidoglycan biosynthesis. In terms of biological role, catalyzes the initial step of the lipid cycle reactions in the biosynthesis of the cell wall peptidoglycan: transfers peptidoglycan precursor phospho-MurNAc-pentapeptide from UDP-MurNAc-pentapeptide onto the lipid carrier undecaprenyl phosphate, yielding undecaprenyl-pyrophosphoryl-MurNAc-pentapeptide, known as lipid I. This is Phospho-N-acetylmuramoyl-pentapeptide-transferase from Streptomyces coelicolor (strain ATCC BAA-471 / A3(2) / M145).